The primary structure comprises 433 residues: Cell division control protein KAR1 (433 aa).

Disordered stretches follow at residues 1–38 (MNVT…SINL), 69–101 (TKNI…FYNG), and 207–227 (KPLP…TLQR). T233 carries the post-translational modification Phosphothreonine.

In terms of assembly, interacts with SPC72.

It is found in the cytoplasm. Its subcellular location is the cytoskeleton. It localises to the microtubule organizing center. The protein localises to the spindle pole body. In terms of biological role, KAR1 is required for function of both intranuclear and extranuclear microtubules. KAR1 helps localize CDC31 to the spindle pole body (SPB), CDC31 then initiates SPB duplication via interaction with a downstream effector. This is Cell division control protein KAR1 (KAR1) from Saccharomyces cerevisiae (strain ATCC 204508 / S288c) (Baker's yeast).